Consider the following 354-residue polypeptide: UDP-3-O-acylglucosamine N-acyltransferase (354 aa).

Histidine 258 (proton acceptor) is an active-site residue.

Belongs to the transferase hexapeptide repeat family. LpxD subfamily. Homotrimer.

It carries out the reaction a UDP-3-O-[(3R)-3-hydroxyacyl]-alpha-D-glucosamine + a (3R)-hydroxyacyl-[ACP] = a UDP-2-N,3-O-bis[(3R)-3-hydroxyacyl]-alpha-D-glucosamine + holo-[ACP] + H(+). Its pathway is bacterial outer membrane biogenesis; LPS lipid A biosynthesis. Catalyzes the N-acylation of UDP-3-O-acylglucosamine using 3-hydroxyacyl-ACP as the acyl donor. Is involved in the biosynthesis of lipid A, a phosphorylated glycolipid that anchors the lipopolysaccharide to the outer membrane of the cell. The chain is UDP-3-O-acylglucosamine N-acyltransferase from Rhizobium meliloti (strain 1021) (Ensifer meliloti).